Consider the following 290-residue polypeptide: Translin-associated protein X (290 aa).

Residues 1-34 (MNGKEGPGGFRKRKHDNFPHNQRREGKDASSSSP) form a disordered region. Residues 16–28 (DNFPHNQRREGKD) are compositionally biased toward basic and acidic residues. An interaction with C1D region spans residues 73–208 (LLHRITSAPD…MRMCINSVGN (136 aa)). Positions 129 and 197 each coordinate Mg(2+). K279 is covalently cross-linked (Glycyl lysine isopeptide (Lys-Gly) (interchain with G-Cter in SUMO2)).

This sequence belongs to the translin family. In terms of assembly, ring-shaped heterooctamer of six TSN and two TSNAX subunits. Interacts with GOLGA3, TSNAXIP1, SUN1 and AKAP9. Interacts with the homodimeric form of C1D following gamma-radiation. Interacts with TSN and C1D in a mutually exclusive manner. In terms of processing, sumoylated with SUMO1. As to expression, detected in cerebellum.

It is found in the cytoplasm. The protein localises to the perinuclear region. It localises to the golgi apparatus. The protein resides in the nucleus. Acts in combination with TSN as an endonuclease involved in the activation of the RNA-induced silencing complex (RISC). Possible role in spermatogenesis. The chain is Translin-associated protein X (Tsnax) from Rattus norvegicus (Rat).